A 470-amino-acid polypeptide reads, in one-letter code: Aspartyl aminopeptidase (470 aa).

Residue His92 participates in Zn(2+) binding. His166 contributes to the substrate binding site. Asp263 contributes to the Zn(2+) binding site. A substrate-binding site is contributed by Glu299. Positions 300 and 343 each coordinate Zn(2+). Residues Asp343, His346, Lys371, and Tyr378 each contribute to the substrate site. His437 lines the Zn(2+) pocket.

This sequence belongs to the peptidase M18 family. Tetrahedron-shaped homododecamer built from six homodimers. It depends on Zn(2+) as a cofactor. As to expression, expressed in various cell types and tissues including the pharynx, neurons, body wall muscle, intestine and vulva.

It localises to the cytoplasm. It is found in the cytosol. It carries out the reaction Release of an N-terminal aspartate or glutamate from a peptide, with a preference for aspartate.. Its function is as follows. Aminopeptidase with specificity towards an acidic amino acid at the N-terminus. Plays a role in membrane trafficking and is specifically involved in the recycling and degradation of endocytic cargo. This Caenorhabditis elegans protein is Aspartyl aminopeptidase.